The sequence spans 551 residues: Histone-lysine N-methyltransferase SETDB2 (551 aa).

One can recognise an MBD domain in the interval 146–210 (LLGHNPLRAP…DRFSFSTQVC (65 aa)). In terms of domain architecture, Pre-SET spans 269–329 (VCCDCTDGCT…RCENRVVQKG (61 aa)). Zn(2+)-binding residues include cysteine 271, cysteine 273, cysteine 277, cysteine 283, cysteine 285, cysteine 310, cysteine 314, cysteine 316, and cysteine 321. The 206-residue stretch at 332 to 537 (VRLQVFRTPE…AGTELTWSCT (206 aa)) folds into the SET domain. 342–344 (HMW) lines the S-adenosyl-L-methionine pocket. The segment at 426–447 (SLAQRRDQQQFSISSETEDNRC) is disordered. S-adenosyl-L-methionine-binding positions include arginine 491 and 494–495 (TH).

Belongs to the class V-like SAM-binding methyltransferase superfamily.

It is found in the nucleus. The protein localises to the chromosome. It carries out the reaction N(6),N(6)-dimethyl-L-lysyl(9)-[histone H3] + S-adenosyl-L-methionine = N(6),N(6),N(6)-trimethyl-L-lysyl(9)-[histone H3] + S-adenosyl-L-homocysteine + H(+). Histone methyltransferase involved in left-right axis specification in early development and mitosis. Specifically trimethylates 'Lys-9' of histone H3 (H3K9me3). H3K9me3 represents a specific tag for epigenetic transcriptional repression by recruiting HP1 (CBX1, CBX3 and/or CBX5) proteins to methylated histones. Contributes to H3K9me3 in both the interspersed repetitive elements and centromere-associated repeats. Plays a role in chromosome condensation and segregation during mitosis. During early development, required to specify the left-right axis by repressing expression of FGF8, leading to negatively regulate the dorsal organizer formation. The sequence is that of Histone-lysine N-methyltransferase SETDB2 (setdb2) from Danio rerio (Zebrafish).